Here is a 679-residue protein sequence, read N- to C-terminus: FAST kinase domain-containing protein 2, mitochondrial (679 aa).

Residues S113 and S126 each carry the phosphoserine modification. Positions 607–664 constitute an RAP domain; the sequence is VAVLCVPKSAYCLNSNHLRGLMAMKIRHLNVMGFHVILIHNWELKKLKMEDAVTFVRK.

This sequence belongs to the FAST kinase family. Monomer. Found in a complex with GRSF1, DDX28, DHX30 and FASTKD5. Associates with the 16S mitochondrial rRNA (16S mt-rRNA). Forms a regulatory protein-RNA complex, consisting of RCC1L, NGRN, RPUSD3, RPUSD4, TRUB2, FASTKD2 and 16S mt-rRNA.

Its subcellular location is the mitochondrion matrix. It localises to the mitochondrion nucleoid. Its function is as follows. Plays an important role in assembly of the mitochondrial large ribosomal subunit. As a component of a functional protein-RNA module, consisting of RCC1L, NGRN, RPUSD3, RPUSD4, TRUB2, FASTKD2 and 16S mitochondrial ribosomal RNA (16S mt-rRNA), controls 16S mt-rRNA abundance and is required for intra-mitochondrial translation. May play a role in mitochondrial apoptosis. The sequence is that of FAST kinase domain-containing protein 2, mitochondrial (Fastkd2) from Rattus norvegicus (Rat).